We begin with the raw amino-acid sequence, 116 residues long: uncharacterized protein (116 aa).

In terms of domain architecture, HTH cro/C1-type spans 6–60 (LKKCRKQKKLTQQNMADKLGITRPAYTAYELGSREPDYKTLINISNILDVSLDYL). Positions 17–36 (QQNMADKLGITRPAYTAYEL) form a DNA-binding region, H-T-H motif.

This is an uncharacterized protein from Bacillus subtilis (strain 168).